We begin with the raw amino-acid sequence, 343 residues long: Ubiquitin carboxyl-terminal hydrolase isozyme L5 (343 aa).

The region spanning 6–218 (GWCTIESDPG…IRFNLMAVIK (213 aa)) is the UCH catalytic domain. The Nucleophile role is filled by Cys-83. The active-site Proton donor is the His-157. A disordered region spans residues 242–266 (LSELNSGSGGDNKEESGGATPTTKE). The ULD domain maps to 306 to 334 (NFTPLILNLIKGLAEKDNLQPLIQKAKDQ).

It belongs to the peptidase C12 family. Component of the 19S (PA700) regulatory complex of the 26S proteasome.

Its subcellular location is the cytoplasm. The protein localises to the nucleus. It carries out the reaction Thiol-dependent hydrolysis of ester, thioester, amide, peptide and isopeptide bonds formed by the C-terminal Gly of ubiquitin (a 76-residue protein attached to proteins as an intracellular targeting signal).. Protease that specifically cleaves 'Lys-48'-linked polyubiquitin chains. Deubiquitinating enzyme associated with the 19S regulatory subunit of the 26S proteasome. The chain is Ubiquitin carboxyl-terminal hydrolase isozyme L5 (uch2) from Dictyostelium discoideum (Social amoeba).